Here is a 188-residue protein sequence, read N- to C-terminus: MRGFYIGRFQPYHNGHHSMVERISEEVDELVLGIGSADDSHTTHDPFTAGERIMMITKAVAEYDLTTYVVPLEDINRNAVWVSHVESMCPDFDVAYSNNPLVVRLFEEAGIEVRQSPMFDRDRLEGSEIRQRMIDDESWRDRVPASVVEVIEEIHGIKRLQHVSDSDSLERYAATGESLPESLDDLDD.

The interval 166–188 (SDSLERYAATGESLPESLDDLDD) is disordered.

Belongs to the archaeal NMN adenylyltransferase family.

It is found in the cytoplasm. It catalyses the reaction beta-nicotinamide D-ribonucleotide + ATP + H(+) = diphosphate + NAD(+). The protein operates within cofactor biosynthesis; NAD(+) biosynthesis; NAD(+) from nicotinamide D-ribonucleotide: step 1/1. In Haloarcula marismortui (strain ATCC 43049 / DSM 3752 / JCM 8966 / VKM B-1809) (Halobacterium marismortui), this protein is Nicotinamide-nucleotide adenylyltransferase.